The sequence spans 174 residues: UBX domain-containing protein 5 (174 aa).

Residues 8–58 adopt a coiled-coil conformation; that stretch reads QKEKFAEDRALLSQQNKEYAESLAKDIAKKEEKDKIRFEAEQKELRKKTIQ. A UBX domain is found at 74-120; the sequence is RLLVRYPNGSRLILSFSPSQPMTSLFDAIILNPACPDYFSVRSVYPR.

As to quaternary structure, forms a complex composed of deubiquitinating enzyme atx-3, adapter ubxn-5 and cdc-48.1. Interacts with atx-3 (via C-terminus). Interacts with cdc-48.1 (via N-terminus) and cdc-48.2. As to expression, specifically expressed in the germline.

Probably acts as an adapter for ATPase cdc-48.1 and/or cdc-48.2, conferring substrate specificity. Unlike other UBX domain-containing protein does not bind 'Lys-48'-polyubiquitinated chain. This is UBX domain-containing protein 5 from Caenorhabditis elegans.